Reading from the N-terminus, the 572-residue chain is MFS-type transporter pydD (572 aa).

Residues 1-15 are compositionally biased toward basic and acidic residues; it reads MLQEDKSSETMHDPS. Residues 1-46 form a disordered region; sequence MLQEDKSSETMHDPSTRGVETRNVTAVDSPLETATTSESPETERTN. N-linked (GlcNAc...) asparagine glycosylation is present at N23. The segment covering 29–39 has biased composition (low complexity); sequence SPLETATTSES. 8 consecutive transmembrane segments (helical) span residues 56–76, 88–108, 123–143, 156–176, 185–205, 212–232, 255–275, and 282–302; these read FWAL…EGTI, LGGG…MTAM, WPML…GGAT, GIGA…VVPL, IVMG…GLIV, WTFY…FSFL, ALFV…GSVY, and VLVP…FEGS. A glycan (N-linked (GlcNAc...) asparagine) is linked at N317. 6 helical membrane passes run 321-341, 358-378, 386-406, 419-439, 451-471, and 529-549; these read VGVM…LYFM, VQIL…GFLM, PIHY…SLLD, IVYS…LLAP, TWSF…AAVF, and WLVS…AREV.

The protein belongs to the major facilitator superfamily.

It is found in the membrane. In terms of biological role, MFS-type transporter; part of the gene cluster that mediates the biosynthesis of pyrrocidines, fungal natural products containing a macrocyclic para-cyclophane connected to a decahydrofluorene ring system that show potent antibiotic activities toward Gram-negative bacteria. The protein is MFS-type transporter pydD of Acremonium sp.